Reading from the N-terminus, the 136-residue chain is Transport protein particle 20 kDa subunit (136 aa).

This sequence belongs to the TRAPP small subunits family. Sedlin subfamily.

The protein resides in the cytoplasm. It is found in the golgi apparatus. Its subcellular location is the cis-Golgi network. The protein localises to the endoplasmic reticulum. Component of the TRAPP I and TRAPP II complexes. TRAPP I plays a key role in the late stages of endoplasmic reticulum to Golgi traffic. TRAPP II seems to play a role in intra-Golgi transport. The polypeptide is Transport protein particle 20 kDa subunit (trs20) (Schizosaccharomyces pombe (strain 972 / ATCC 24843) (Fission yeast)).